Reading from the N-terminus, the 1530-residue chain is DNA-directed RNA polymerase III subunit RPC1 (1530 aa).

Zn(2+) is bound by residues cysteine 74, cysteine 77, cysteine 84, histidine 87, cysteine 114, cysteine 117, and cysteine 161. Mg(2+) is bound by residues aspartate 503, aspartate 505, and aspartate 507. Positions 846–858 (PTEFFFHTMAGRE) are bridging helix. A compositionally biased stretch (basic and acidic residues) spans 992–1001 (EEQESREDAL). 2 disordered regions span residues 992 to 1016 (EEQESREDALHNSNGKTNDRESRPR) and 1057 to 1099 (NLLN…SKEG).

Belongs to the RNA polymerase beta' chain family. As to quaternary structure, component of the RNA polymerase III (Pol III) complex consisting of 17 subunits.

It is found in the nucleus. The catalysed reaction is RNA(n) + a ribonucleoside 5'-triphosphate = RNA(n+1) + diphosphate. In terms of biological role, DNA-dependent RNA polymerase catalyzes the transcription of DNA into RNA using the four ribonucleoside triphosphates as substrates. Largest and catalytic core component of RNA polymerase III which synthesizes small RNAs, such as 5S rRNA and tRNAs. Forms the polymerase active center together with the second largest subunit. A single-stranded DNA template strand of the promoter is positioned within the central active site cleft of Pol III. A bridging helix emanates from RPC1 and crosses the cleft near the catalytic site and is thought to promote translocation of Pol III by acting as a ratchet that moves the RNA-DNA hybrid through the active site by switching from straight to bent conformations at each step of nucleotide addition. The protein is DNA-directed RNA polymerase III subunit RPC1 of Trypanosoma brucei brucei.